The primary structure comprises 357 residues: Chorismate synthase (357 aa).

Residue Arg-47 coordinates NADP(+). FMN-binding positions include 123–125, Gly-281, 296–300, and Arg-324; these read RAS and KPTSS.

Belongs to the chorismate synthase family. In terms of assembly, homotetramer. The cofactor is FMNH2.

The enzyme catalyses 5-O-(1-carboxyvinyl)-3-phosphoshikimate = chorismate + phosphate. It functions in the pathway metabolic intermediate biosynthesis; chorismate biosynthesis; chorismate from D-erythrose 4-phosphate and phosphoenolpyruvate: step 7/7. Its function is as follows. Catalyzes the anti-1,4-elimination of the C-3 phosphate and the C-6 proR hydrogen from 5-enolpyruvylshikimate-3-phosphate (EPSP) to yield chorismate, which is the branch point compound that serves as the starting substrate for the three terminal pathways of aromatic amino acid biosynthesis. This reaction introduces a second double bond into the aromatic ring system. This is Chorismate synthase from Chlamydia trachomatis serovar L2 (strain ATCC VR-902B / DSM 19102 / 434/Bu).